A 127-amino-acid chain; its full sequence is Putative pre-16S rRNA nuclease (127 aa).

It belongs to the YqgF nuclease family.

The protein resides in the cytoplasm. Functionally, could be a nuclease involved in processing of the 5'-end of pre-16S rRNA. The protein is Putative pre-16S rRNA nuclease of Campylobacter jejuni subsp. jejuni serotype O:6 (strain 81116 / NCTC 11828).